The following is a 607-amino-acid chain: Aspartate--tRNA(Asp/Asn) ligase (607 aa).

Glutamate 194 serves as a coordination point for L-aspartate. Residues 218–221 form an aspartate region; sequence QLFK. Arginine 240 is an L-aspartate binding site. ATP-binding positions include 240-242 and glutamine 249; that span reads RDE. Histidine 468 is a binding site for L-aspartate. Glutamate 502 provides a ligand contact to ATP. Arginine 509 is an L-aspartate binding site. Position 554–557 (554–557) interacts with ATP; that stretch reads GLDR.

Belongs to the class-II aminoacyl-tRNA synthetase family. Type 1 subfamily. Homodimer.

The protein resides in the cytoplasm. The enzyme catalyses tRNA(Asx) + L-aspartate + ATP = L-aspartyl-tRNA(Asx) + AMP + diphosphate. Aspartyl-tRNA synthetase with relaxed tRNA specificity since it is able to aspartylate not only its cognate tRNA(Asp) but also tRNA(Asn). Reaction proceeds in two steps: L-aspartate is first activated by ATP to form Asp-AMP and then transferred to the acceptor end of tRNA(Asp/Asn). The polypeptide is Aspartate--tRNA(Asp/Asn) ligase (Desulfotalea psychrophila (strain LSv54 / DSM 12343)).